Here is a 279-residue protein sequence, read N- to C-terminus: uncharacterized protein (279 aa).

Belongs to the peptidase C59 family.

This is an uncharacterized protein from Chlorella (PBCV-1).